Reading from the N-terminus, the 1061-residue chain is Isoleucine--tRNA ligase (1061 aa).

A 'HIGH' region motif is present at residues 50–60 (PYTSGSAHMGT). The 'KMSKS' region motif lies at 604-608 (KMSKS). Lys-607 is a binding site for ATP.

Belongs to the class-I aminoacyl-tRNA synthetase family. IleS type 2 subfamily. In terms of assembly, monomer. Requires Zn(2+) as cofactor.

It localises to the cytoplasm. It catalyses the reaction tRNA(Ile) + L-isoleucine + ATP = L-isoleucyl-tRNA(Ile) + AMP + diphosphate. Its function is as follows. Catalyzes the attachment of isoleucine to tRNA(Ile). As IleRS can inadvertently accommodate and process structurally similar amino acids such as valine, to avoid such errors it has two additional distinct tRNA(Ile)-dependent editing activities. One activity is designated as 'pretransfer' editing and involves the hydrolysis of activated Val-AMP. The other activity is designated 'posttransfer' editing and involves deacylation of mischarged Val-tRNA(Ile). This chain is Isoleucine--tRNA ligase, found in Natronomonas pharaonis (strain ATCC 35678 / DSM 2160 / CIP 103997 / JCM 8858 / NBRC 14720 / NCIMB 2260 / Gabara) (Halobacterium pharaonis).